The sequence spans 231 residues: N-acetylmuramate alpha-1-phosphate uridylyltransferase (231 aa).

UTP is bound by residues 11-13 (GER) and lysine 23. Asparagine 106 lines the substrate pocket. Aspartate 108 is a binding site for Mg(2+). 2 residues coordinate substrate: aspartate 146 and aspartate 213. Aspartate 213 provides a ligand contact to Mg(2+).

It belongs to the nucleotidyltransferase MurU family. In terms of assembly, monomer. The cofactor is Mg(2+).

The catalysed reaction is N-acetyl-alpha-D-muramate 1-phosphate + UDP + H(+) = UDP-N-acetyl-alpha-D-muramate + phosphate. The protein operates within cell wall biogenesis; peptidoglycan recycling. In terms of biological role, catalyzes the formation of UDP-N-acetylmuramate (UDP-MurNAc), a crucial precursor of the bacterial peptidoglycan cell wall, from UTP and MurNAc-alpha-1P. Is likely involved in peptidoglycan recycling as part of a cell wall recycling pathway that bypasses de novo biosynthesis of the peptidoglycan precursor UDP-MurNAc. Is able to complement the fosfomycin sensitivity phenotype of a P.putida mutant lacking murU. The chain is N-acetylmuramate alpha-1-phosphate uridylyltransferase from Neisseria meningitidis serogroup B (strain ATCC BAA-335 / MC58).